Reading from the N-terminus, the 610-residue chain is MATVTASSNFVSRTSLFNNHGASSCSDVAQITLKGQSLTHCGLRSFNMVDNLQRRSQAKPVSAKSSKRSSKVKTAGKIVCEKGMSVIFIGAEVGPWSKTGGLGDVLGGLPPALAARGHRVMTICPRYDQYKDAWDTCVVVQIKVGDKVENVRFFHCYKRGVDRVFVDHPIFLAKVVGKTGSKIYGPITGVDYNDNQLRFSLLCQAALEAPQVLNLNSSKYFSGPYGEDVVFVANDWHTALLPCYLKSMYQSRGVYMNAKVVFCIHNIAYQGRFAFDDYSLLNLPISFKSSFDFMDGYEKPVKGRKINWMKAAILEAHRVLTVSPYYAQELISGVDRGVELHKYLRMKTVSGIINGMDVQEWNPSTDKYIDIKYDITTVTDAKPLIKEALQAAVGLPVDRDVPVIGFIGRLEEQKGSDILVEAISKFMGLNVQMVILGTGKKKMEAQILELEEKFPGKAVGVAKFNVPLAHMITAGADFIIVPSRFEPCGLIQLHAMRYGTVPIVASTGGLVDTVKDGYTGFHIGRFNVKCEVVDPDDVIATAKAVTRAVAVYGTSAMQEMVKNCMDQDFSWKGPARLWEKVLLSLNVAGSEAGTEGEEIAPLAKENVATP.

A chloroplast-targeting transit peptide spans 1–79 (MATVTASSNF…SKVKTAGKIV (79 aa)). Lysine 98 provides a ligand contact to ADP-alpha-D-glucose. Positions 438 to 454 (TGKKKMEAQILELEEKF) form a coiled coil.

Belongs to the glycosyltransferase 1 family. Bacterial/plant glycogen synthase subfamily. Interacts with PTST. This interaction is critical for the localization to starch granules. Expressed in roots, inflorescences, flowers, fruits and at much higher levels in leaves.

It localises to the plastid. Its subcellular location is the chloroplast. The enzyme catalyses an NDP-alpha-D-glucose + [(1-&gt;4)-alpha-D-glucosyl](n) = [(1-&gt;4)-alpha-D-glucosyl](n+1) + a ribonucleoside 5'-diphosphate + H(+). The protein operates within glycan biosynthesis; starch biosynthesis. Required for the synthesis of amylose. Destroyed as it is released from the starch granules during the night. The circadian expression is controlled by CCA1 and LHY transcription factors. This Arabidopsis thaliana (Mouse-ear cress) protein is Granule-bound starch synthase 1, chloroplastic/amyloplastic.